The following is a 533-amino-acid chain: E3 ubiquitin-protein ligase MGRN1 (533 aa).

Residue Gly2 is the site of N-myristoyl glycine attachment. Residues 278 to 317 (ECVVCLSDLRDTLILPCRHLCLCTSCADTLRYQANNCPIC) form an RING-type zinc finger. A Required for TSG101-binding motif is present at residues 385–388 (PSAP). Tyr390 is subject to Phosphotyrosine. The interval 421 to 519 (QKGKTQSKSP…QPVPPADIYL (99 aa)) is disordered. The segment covering 423–439 (GKTQSKSPDSTLRSPSS) has biased composition (polar residues). Phosphoserine is present on residues Ser429, Ser450, and Ser502. Residues 443 to 454 (EEDEEKLSEDPE) are compositionally biased toward acidic residues.

As to quaternary structure, interacts with MC1R and MC4R. Interacts with TSG101. Interacts with mislocalized cytosolically exposed PRNP; this interaction alters MGRN1 subcellular location and causes lysosomal enlargement. Post-translationally, autoubiquitinated in vitro.

The protein localises to the cytoplasm. The protein resides in the cytosol. Its subcellular location is the cell membrane. It is found in the early endosome. It carries out the reaction S-ubiquitinyl-[E2 ubiquitin-conjugating enzyme]-L-cysteine + [acceptor protein]-L-lysine = [E2 ubiquitin-conjugating enzyme]-L-cysteine + N(6)-ubiquitinyl-[acceptor protein]-L-lysine.. It participates in protein modification; protein ubiquitination. In terms of biological role, E3 ubiquitin-protein ligase. Mediates TSG101 monoubiquitination at multiple sites. Plays a role in the regulation of endosome-to-lysosome trafficking. Impairs MC1R- and MC4R-signaling by competing with GNAS-binding to MCRs and inhibiting agonist-induced cAMP production. Does not inhibit ADRB2-signaling. Does not promote MC1R ubiquitination. Also acts as a negative regulator of hedgehog signaling. This chain is E3 ubiquitin-protein ligase MGRN1 (Mgrn1), found in Rattus norvegicus (Rat).